Reading from the N-terminus, the 315-residue chain is 3-chlorobenzoate-3,4-dioxygenase reductase subunit (315 aa).

An FMN-binding site is contributed by 1–103 (MVAIDQHDTY…GATTRISAPR (103 aa)). One can recognise an FAD-binding FR-type domain in the interval 7–109 (HDTYSVRVIS…SAPRNAFALD (103 aa)). The 2Fe-2S ferredoxin-type domain occupies 228–315 (NEFTVNLARS…ALSPELTLDL (88 aa)). [2Fe-2S] cluster is bound by residues cysteine 264, cysteine 269, cysteine 272, and cysteine 302.

Belongs to the PDR/VanB family. This dioxygenase system consists of two proteins: phthalate oxygenase and phthalate oxygenase reductase. The cofactor is FMN.

The protein is 3-chlorobenzoate-3,4-dioxygenase reductase subunit (cbaB) of Comamonas testosteroni (Pseudomonas testosteroni).